The following is a 544-amino-acid chain: Chaperonin GroEL (544 aa).

ATP-binding positions include 30–33 (TLGP), Lys51, 87–91 (DGTTT), Gly415, and Asp495.

It belongs to the chaperonin (HSP60) family. As to quaternary structure, forms a cylinder of 14 subunits composed of two heptameric rings stacked back-to-back. Interacts with the co-chaperonin GroES.

It is found in the cytoplasm. It carries out the reaction ATP + H2O + a folded polypeptide = ADP + phosphate + an unfolded polypeptide.. In terms of biological role, together with its co-chaperonin GroES, plays an essential role in assisting protein folding. The GroEL-GroES system forms a nano-cage that allows encapsulation of the non-native substrate proteins and provides a physical environment optimized to promote and accelerate protein folding. This chain is Chaperonin GroEL, found in Aeromonas salmonicida (strain A449).